Reading from the N-terminus, the 128-residue chain is Small ribosomal subunit protein bS6 (128 aa).

Belongs to the bacterial ribosomal protein bS6 family.

In terms of biological role, binds together with bS18 to 16S ribosomal RNA. The protein is Small ribosomal subunit protein bS6 of Leifsonia xyli subsp. xyli (strain CTCB07).